The chain runs to 363 residues: Isopentenyl-diphosphate delta-isomerase (363 aa).

Arginine 7–lysine 8 is a substrate binding site. Residues alanine 71 to threonine 73, serine 101, and asparagine 130 contribute to the FMN site. Glutamine 160 contacts substrate. Glutamate 161 serves as a coordination point for Mg(2+). Residues lysine 192, serine 217, threonine 222, glycine 270–arginine 272, and alanine 291–glycine 292 contribute to the FMN site.

The protein belongs to the IPP isomerase type 2 family. As to quaternary structure, homooctamer. Dimer of tetramers. It depends on FMN as a cofactor. Requires NADPH as cofactor. Mg(2+) is required as a cofactor.

It is found in the cytoplasm. It carries out the reaction isopentenyl diphosphate = dimethylallyl diphosphate. In terms of biological role, involved in the biosynthesis of isoprenoids. Catalyzes the 1,3-allylic rearrangement of the homoallylic substrate isopentenyl (IPP) to its allylic isomer, dimethylallyl diphosphate (DMAPP). This is Isopentenyl-diphosphate delta-isomerase from Symbiobacterium thermophilum (strain DSM 24528 / JCM 14929 / IAM 14863 / T).